A 355-amino-acid chain; its full sequence is MNSLKNDRYLRALLRQPVDVTPVWMMRQAGRYLPEYKATRAQAGDFMSLCKNAELACEVTLQPLRRFDLDAAILFSDILTIPDAMGLGLYFEQGEGPKFSKPITSMADIQNLPAPDPEQELQYVMNAVRTIRKNLQGEVPLIGFSGSPWTLATYMIEGGSSKAFTKIKKMAFSDPQALHLLLDKLADSVILYLNAQIDAGAQSVMVFDTWGGVLSPRDYQDFSLQYMHKIVDGLTRENDGRKVPVTLFTKNAGMWLESIAATGCDGVGLDWTIDIDNAKARVGDKVALQGNMDPSMLYAAPERIEQEVQKILAGFGEGPGHVFNLGHGIHLDVPPENAKVFVDAVHKYSAQYHKG.

Substrate is bound by residues 27-31, Asp-77, Tyr-154, Thr-209, and His-327; that span reads RQAGR.

Belongs to the uroporphyrinogen decarboxylase family. As to quaternary structure, homodimer.

The protein localises to the cytoplasm. It carries out the reaction uroporphyrinogen III + 4 H(+) = coproporphyrinogen III + 4 CO2. It functions in the pathway porphyrin-containing compound metabolism; protoporphyrin-IX biosynthesis; coproporphyrinogen-III from 5-aminolevulinate: step 4/4. In terms of biological role, catalyzes the decarboxylation of four acetate groups of uroporphyrinogen-III to yield coproporphyrinogen-III. This Pseudoalteromonas atlantica (strain T6c / ATCC BAA-1087) protein is Uroporphyrinogen decarboxylase.